The chain runs to 1199 residues: Chromatin structure-remodeling complex subunit snf21 (1199 aa).

The HSA domain maps to 256-328; that stretch reads QRSDRERRLK…AKQRLQALKE (73 aa). In terms of domain architecture, Helicase ATP-binding spans 429–594; that stretch reads ISLYNNHLNG…WALLNFVLPR (166 aa). ATP is bound at residue 442–449; that stretch reads DEMGLGKT. A DEGH box motif is present at residues 544–547; sequence DEGH. A Helicase C-terminal domain is found at 740–903; the sequence is LLDRILPKLF…STPEEREAFL (164 aa). Positions 1017 to 1059 are disordered; the sequence is MESEARPTRGRPKRNIASVDETPALTLNGKPKKKRGPAPDTLT. Positions 1061 to 1171 constitute a Bromo domain; it reads EHRSLLRRVC…TAMETKIEEL (111 aa).

Belongs to the SNF2/RAD54 helicase family. In terms of assembly, component of the RSC complex composed of at least arp9, arp42, rsc1, rsc4, rsc7, rsc9, rsc58, sfh1, snf21, ssr1, ssr2, ssr3 and ssr4. The complex interacts with histone and histone variant components of centromeric chromatin.

It localises to the nucleus. Helicase. Component of the chromatin structure remodeling complex (RSC), which is involved in transcription regulation and nucleosome positioning. Controls particularly membrane and organelle development genes. The chain is Chromatin structure-remodeling complex subunit snf21 (snf21) from Schizosaccharomyces pombe (strain 972 / ATCC 24843) (Fission yeast).